A 410-amino-acid polypeptide reads, in one-letter code: Probable nicotinate phosphoribosyltransferase (410 aa).

Tyr15, Phe170, and Thr220 together coordinate nicotinate. Residue His223 is modified to Phosphohistidine. Residue Thr348 coordinates 5-phospho-alpha-D-ribose 1-diphosphate.

Belongs to the NAPRTase family. Mg(2+) serves as cofactor. The cofactor is Mn(2+). Transiently phosphorylated on a His residue during the reaction cycle. Phosphorylation strongly increases the affinity for substrates and increases the rate of nicotinate D-ribonucleotide production. Dephosphorylation regenerates the low-affinity form of the enzyme, leading to product release.

The enzyme catalyses nicotinate + 5-phospho-alpha-D-ribose 1-diphosphate + ATP + H2O = nicotinate beta-D-ribonucleotide + ADP + phosphate + diphosphate. It participates in cofactor biosynthesis; NAD(+) biosynthesis; nicotinate D-ribonucleotide from nicotinate: step 1/1. Catalyzes the first step in the biosynthesis of NAD from nicotinic acid, the ATP-dependent synthesis of beta-nicotinate D-ribonucleotide from nicotinate and 5-phospho-D-ribose 1-phosphate. Helps prevent cellular oxidative stress via its role in NAD biosynthesis. This chain is Probable nicotinate phosphoribosyltransferase, found in Schizosaccharomyces pombe (strain 972 / ATCC 24843) (Fission yeast).